Here is a 470-residue protein sequence, read N- to C-terminus: Cysteine--tRNA ligase (470 aa).

Cys31 contributes to the Zn(2+) binding site. Positions 33 to 43 (PTVYDYVHIGH) match the 'HIGH' region motif. Residues Cys209, His234, and Glu238 each coordinate Zn(2+). The 'KMSKS' region signature appears at 266–270 (KMSKS). Residue Lys269 participates in ATP binding.

Belongs to the class-I aminoacyl-tRNA synthetase family. The cofactor is Zn(2+).

Its subcellular location is the cytoplasm. The enzyme catalyses tRNA(Cys) + L-cysteine + ATP = L-cysteinyl-tRNA(Cys) + AMP + diphosphate. This Saccharolobus solfataricus (strain ATCC 35092 / DSM 1617 / JCM 11322 / P2) (Sulfolobus solfataricus) protein is Cysteine--tRNA ligase.